Consider the following 165-residue polypeptide: Probable chemoreceptor glutamine deamidase CheD (165 aa).

The protein belongs to the CheD family.

It catalyses the reaction L-glutaminyl-[protein] + H2O = L-glutamyl-[protein] + NH4(+). Functionally, probably deamidates glutamine residues to glutamate on methyl-accepting chemotaxis receptors (MCPs), playing an important role in chemotaxis. The chain is Probable chemoreceptor glutamine deamidase CheD from Geobacillus kaustophilus (strain HTA426).